The following is a 445-amino-acid chain: N-succinylarginine dihydrolase (445 aa).

Residues 19–28 (AGLSFGNVAS), N110, and 137–138 (HR) contribute to the substrate site. E174 is an active-site residue. R214 contacts substrate. H250 is an active-site residue. Positions 252 and 363 each coordinate substrate. The Nucleophile role is filled by C369.

Belongs to the succinylarginine dihydrolase family. Homodimer.

It carries out the reaction N(2)-succinyl-L-arginine + 2 H2O + 2 H(+) = N(2)-succinyl-L-ornithine + 2 NH4(+) + CO2. It functions in the pathway amino-acid degradation; L-arginine degradation via AST pathway; L-glutamate and succinate from L-arginine: step 2/5. In terms of biological role, catalyzes the hydrolysis of N(2)-succinylarginine into N(2)-succinylornithine, ammonia and CO(2). This is N-succinylarginine dihydrolase from Shewanella piezotolerans (strain WP3 / JCM 13877).